We begin with the raw amino-acid sequence, 227 residues long: Cytidylate kinase (227 aa).

Residue 10–18 (GPASSGKST) coordinates ATP.

This sequence belongs to the cytidylate kinase family. Type 1 subfamily.

It localises to the cytoplasm. It catalyses the reaction CMP + ATP = CDP + ADP. It carries out the reaction dCMP + ATP = dCDP + ADP. The protein is Cytidylate kinase of Streptococcus mutans serotype c (strain ATCC 700610 / UA159).